A 304-amino-acid polypeptide reads, in one-letter code: MTEQNQQPKTYCGFIAIVGRPNVGKSTLLNKILGQKISITSRKAQTTRHRIVGIHTEDQYQAIYVDTPGLHIEEKRAINRLMNRAASSAIGDVDLIIFVVEGTKWTDDDEMVLNKLRAAKAPVVLAINKVDNIKEKDELLPHITELSQKFDFAEILPISAQRGKNVHILQKIVRKSLREGVHHFPEEYVTDRSQRFMASEIIREKLMRFTGEELPYSVTVEIEQFKLNERGTYEINGLILVEREGQKKMVIGVKGQKIKTIGMEARADMERLFDNKVHLELWVKVKAGWADDERALRSLGYMDE.

The Era-type G domain occupies 11–179 (YCGFIAIVGR…QKIVRKSLRE (169 aa)). A G1 region spans residues 19–26 (GRPNVGKS). 19–26 (GRPNVGKS) provides a ligand contact to GTP. The segment at 45 to 49 (QTTRH) is G2. The tract at residues 66–69 (DTPG) is G3. GTP-binding positions include 66 to 70 (DTPGL) and 128 to 131 (NKVD). Positions 128 to 131 (NKVD) are G4. A G5 region spans residues 158-160 (ISA). The region spanning 210–287 (TGEELPYSVT…HLELWVKVKA (78 aa)) is the KH type-2 domain.

The protein belongs to the TRAFAC class TrmE-Era-EngA-EngB-Septin-like GTPase superfamily. Era GTPase family. In terms of assembly, monomer.

Its subcellular location is the cytoplasm. The protein localises to the cell inner membrane. Its function is as follows. An essential GTPase that binds both GDP and GTP, with rapid nucleotide exchange. Plays a role in 16S rRNA processing and 30S ribosomal subunit biogenesis and possibly also in cell cycle regulation and energy metabolism. In Actinobacillus pleuropneumoniae serotype 3 (strain JL03), this protein is GTPase Era.